The primary structure comprises 86 residues: Small ribosomal subunit protein bS20 (86 aa).

The segment at 1–25 (MANIKSQIKRIRTNEKARQRNKAYK) is disordered. A compositionally biased stretch (basic and acidic residues) spans 12–25 (RTNEKARQRNKAYK).

The protein belongs to the bacterial ribosomal protein bS20 family.

Its function is as follows. Binds directly to 16S ribosomal RNA. This chain is Small ribosomal subunit protein bS20, found in Beutenbergia cavernae (strain ATCC BAA-8 / DSM 12333 / CCUG 43141 / JCM 11478 / NBRC 16432 / NCIMB 13614 / HKI 0122).